The sequence spans 495 residues: MRLPKLLTLLLWHLAWLDLELICTVLGAPDLGQRTPGAKPGLTKAEAKERPPLARNVFRPGGHIYGVGATNARAKGSSGQTQAKKDEPRKMPPRSGGPETKPGPSSQTRQAAARTVTPKGQLPGGKASSKAGSAPSSFLLKKTREPGTPREPKEPFRPPPITPHEYMLSLYRTLSDADRKGGNSSVKLEAGLANTITSFIDKGQDDRGPAVRKQRYVFDISALEKDGLLGAELRILRKKPLDVAKPAVPSSGRVAQLKLSSCPSGRQPAALLDVRSVPGLDGSGWEVFDIWKLFRNFKNSAQLCLELEAWERGRAVDLRGLGFERTARQVHEKALFLVFGRTKKRDLFFNEIKARSGQDDKTVYEYLFSQRRKRRAPLANRQGKRPSKNLKARCSRKALHVNFKDMGWDDWIIAPLEYEAFHCEGLCEFPLRSHLEPTNHAVIQTLMNSMDPESTPPTCCVPTRLSPISILFIDSANNVVYKQYEDMVVESCGCR.

A signal peptide spans 1–27; it reads MRLPKLLTLLLWHLAWLDLELICTVLG. A propeptide spanning residues 28–375 is cleaved from the precursor; it reads APDLGQRTPG…YLFSQRRKRR (348 aa). Residues 30–162 form a disordered region; the sequence is DLGQRTPGAK…KEPFRPPPIT (133 aa). The span at 124-137 shows a compositional bias: low complexity; that stretch reads GGKASSKAGSAPSS. Positions 142 to 156 are enriched in basic and acidic residues; that stretch reads KTREPGTPREPKEPF. Residue Asn183 is glycosylated (N-linked (GlcNAc...) asparagine). Intrachain disulfides connect Cys394–Cys460, Cys423–Cys492, and Cys427–Cys494.

It belongs to the TGF-beta family. Homodimer; disulfide-linked. Interacts with serine proteases, HTRA1 and HTRA3. Following LPS binding, may form a complex with CXCR4, HSP90AA1 and HSPA8. Interacts with high affinity with NOG; inhibits chondrogenesis. Interacts with high affinity with BMPR1B and lower affinity with BMPR1A; positively regulates chondrocyte differentiation and induces SMAD-dependent signaling. Interacts with FBN1 (via N-terminal domain) and FBN2. Interacts with TGFBR3.

It localises to the secreted. It is found in the cell membrane. In terms of biological role, growth factor involved in bone and cartilage formation. During cartilage development regulates differentiation of chondrogenic tissue through two pathways. Firstly, positively regulates differentiation of chondrogenic tissue through its binding of high affinity with BMPR1B and of less affinity with BMPR1A, leading to induction of SMAD1-SMAD5-SMAD8 complex phosphorylation and then SMAD protein signaling transduction. Secondly, negatively regulates chondrogenic differentiation through its interaction with NOG. Required to prevent excessive muscle loss upon denervation. This function requires SMAD4 and is mediated by phosphorylated SMAD1/5/8. Binds bacterial lipopolysaccharide (LPS) and mediates LPS-induced inflammatory response, including TNF secretion by monocytes. The sequence is that of Growth/differentiation factor 5 (Gdf5) from Mus musculus (Mouse).